Consider the following 1011-residue polypeptide: Probable beta-galactosidase E (1011 aa).

The N-terminal stretch at 1 to 19 (MKSLLKRLIALAAAYSVAA) is a signal peptide. 5 residues coordinate substrate: tyrosine 92, asparagine 136, alanine 137, glutamate 138, and asparagine 195. Residue glutamate 196 is the Proton donor of the active site. Residue asparagine 202 is glycosylated (N-linked (GlcNAc...) asparagine). Tyrosine 261 contributes to the substrate binding site. Residues cysteine 267 and cysteine 316 are joined by a disulfide bond. Glutamate 299 serves as the catalytic Nucleophile. Tyrosine 365 provides a ligand contact to substrate. Asparagine 406, asparagine 423, asparagine 446, asparagine 455, asparagine 588, asparagine 622, asparagine 704, asparagine 745, asparagine 759, asparagine 772, asparagine 778, and asparagine 913 each carry an N-linked (GlcNAc...) asparagine glycan.

This sequence belongs to the glycosyl hydrolase 35 family.

It localises to the secreted. The enzyme catalyses Hydrolysis of terminal non-reducing beta-D-galactose residues in beta-D-galactosides.. Functionally, cleaves beta-linked terminal galactosyl residues from gangliosides, glycoproteins, and glycosaminoglycans. This chain is Probable beta-galactosidase E (lacE), found in Aspergillus fumigatus (strain CBS 144.89 / FGSC A1163 / CEA10) (Neosartorya fumigata).